Reading from the N-terminus, the 135-residue chain is Small ribosomal subunit protein bS16m/bS16c (135 aa).

A chloroplast and mitochondrion-targeting transit peptide spans 1–7 (MVVRIRL). Residues 87-135 (PMVAMGRKGGARDTRPVDPMTGRYVDAENKTVNANDNQPKEEDTEAKSA) are disordered. Basic and acidic residues predominate over residues 124-135 (QPKEEDTEAKSA).

The protein belongs to the bacterial ribosomal protein bS16 family. In terms of assembly, component of the mitochondrial ribosome small subunit. As to expression, expressed at low levels in flowers, and, to a lower extent, in leaves, stems and roots.

It localises to the mitochondrion. The protein resides in the plastid. The protein localises to the chloroplast. This chain is Small ribosomal subunit protein bS16m/bS16c, found in Arabidopsis thaliana (Mouse-ear cress).